Here is a 203-residue protein sequence, read N- to C-terminus: MKIMVVYYSAYGHVHRLAEAVAEGASEIVDVEVVMRRVPETLPEALLKKIGVFEAQQAFAHVPVCEVAELETADAILFGTPARFGNMCGQMRSFLDATGGLWAKGALVGKVGSVFTSTGTQHGGQESTILSFHTTLLHHGMIIVGLPYTFQGQSRNDEITGCSPYGASTIAGSANDRWPTENELAGANFQGRHVACIAGKLFQ.

The Flavodoxin-like domain maps to 3-194 (IMVVYYSAYG…AGANFQGRHV (192 aa)). Residues 9–14 (SAYGHV) and 82–84 (ARF) contribute to the FMN site. Position 11 (Tyr-11) interacts with NAD(+). Residue Trp-102 coordinates substrate. FMN-binding positions include 117–123 (STGTQHG) and His-138.

The protein belongs to the WrbA family. The cofactor is FMN.

It catalyses the reaction a quinone + NADH + H(+) = a quinol + NAD(+). The enzyme catalyses a quinone + NADPH + H(+) = a quinol + NADP(+). The protein is NAD(P)H dehydrogenase (quinone) of Syntrophus aciditrophicus (strain SB).